The primary structure comprises 385 residues: 1-deoxy-D-xylulose 5-phosphate reductoisomerase (385 aa).

NADPH is bound by residues T10, G11, S12, I13, and N124. Residue K125 participates in 1-deoxy-D-xylulose 5-phosphate binding. NADPH is bound at residue E126. Mn(2+) is bound at residue D150. 1-deoxy-D-xylulose 5-phosphate-binding residues include S151, E152, S176, and H199. E152 provides a ligand contact to Mn(2+). G205 provides a ligand contact to NADPH. Residues S212, N217, K218, and E221 each contribute to the 1-deoxy-D-xylulose 5-phosphate site. A Mn(2+)-binding site is contributed by E221.

This sequence belongs to the DXR family. It depends on Mg(2+) as a cofactor. The cofactor is Mn(2+).

It carries out the reaction 2-C-methyl-D-erythritol 4-phosphate + NADP(+) = 1-deoxy-D-xylulose 5-phosphate + NADPH + H(+). The protein operates within isoprenoid biosynthesis; isopentenyl diphosphate biosynthesis via DXP pathway; isopentenyl diphosphate from 1-deoxy-D-xylulose 5-phosphate: step 1/6. Catalyzes the NADPH-dependent rearrangement and reduction of 1-deoxy-D-xylulose-5-phosphate (DXP) to 2-C-methyl-D-erythritol 4-phosphate (MEP). The chain is 1-deoxy-D-xylulose 5-phosphate reductoisomerase from Clostridium kluyveri (strain NBRC 12016).